Here is a 288-residue protein sequence, read N- to C-terminus: Elongation factor Ts (288 aa).

Residues 79–82 (TDFV) are involved in Mg(2+) ion dislocation from EF-Tu.

Belongs to the EF-Ts family.

It is found in the cytoplasm. Associates with the EF-Tu.GDP complex and induces the exchange of GDP to GTP. It remains bound to the aminoacyl-tRNA.EF-Tu.GTP complex up to the GTP hydrolysis stage on the ribosome. This Ehrlichia ruminantium (strain Gardel) protein is Elongation factor Ts.